The following is a 1089-amino-acid chain: GPI ethanolamine phosphate transferase 3, catalytic subunit (1089 aa).

Residues 4–24 (ASVLLFLAWVCFLFYAGIALF) traverse the membrane as a helical segment. A glycan (N-linked (GlcNAc...) asparagine) is linked at asparagine 268. Transmembrane regions (helical) follow at residues 457 to 477 (LLAASCFICLLASQWAISPGF), 482 to 502 (LLLTPVAWGLVGAIAYAGLLG), 510 to 530 (LVLLGAVAAVSSFLPFLWKAW), 541 to 561 (TLFPIPGPVLLLLLFRLAVFF), 575 to 595 (FLLGSFILLLVVQLHWEGQLL), 668 to 688 (LWYGACVAALVALLAAVRLWL), 701 to 721 (MLFVRWGLPLMALGTAAYWAL), 747 to 767 (VAGLAASGLALLLWKPVTVLV), 830 to 850 (SVYSAAMVTALTLLAFPLLLL), 857 to 877 (LVFLLLFLQSFLLLHLLAAGI), 944 to 964 (FASHLLFAVGCPLLLLWPFLC), 1014 to 1034 (LKYLFILGIQILACALAASIL), and 1048 to 1068 (FIFEAVGFIVSSVGLLLGIAL).

Belongs to the PIGG/PIGN/PIGO family. PIGO subfamily. As to quaternary structure, part of the ethanolamine phosphate transferase 3 complex composed by PIGO and PIGF. PIGF is required to stabilize PIGO.

It localises to the endoplasmic reticulum membrane. Its pathway is glycolipid biosynthesis; glycosylphosphatidylinositol-anchor biosynthesis. In terms of biological role, catalytic subunit of the ethanolamine phosphate transferase 3 complex that transfers an ethanolamine phosphate (EtNP) from a phosphatidylethanolamine (PE) to the 6-OH position of the third alpha-1,2-linked mannose of an alpha-D-Man-(1-&gt;2)-alpha-D-Man-(1-&gt;6)-2-PEtn-alpha-D-Man-(1-&gt;4)-alpha-D-GlcN-(1-&gt;6)-(1-radyl,2-acyl-sn-glycero-3-phospho)-2-acyl-inositol (also termed H6) intermediate to generate a 6-PEtn-alpha-D-Man-(1-&gt;2)-alpha-D-Man-(1-&gt;6)-2-PEtn-alpha-D-Man-(1-&gt;4)-alpha-D-GlcN-(1-&gt;6)-(1-radyl,2-acyl-sn-glycero-3-phospho)-2-acyl-inositol (also termed H7) and participates in the tenth step of the glycosylphosphatidylinositol-anchor biosynthesis. This chain is GPI ethanolamine phosphate transferase 3, catalytic subunit, found in Homo sapiens (Human).